Reading from the N-terminus, the 98-residue chain is NADH-ubiquinone oxidoreductase chain 4L (98 aa).

3 consecutive transmembrane segments (helical) span residues 1 to 21, 30 to 50, and 61 to 81; these read MSLT…GLLM, LLCL…TILI, and IILL…LVAV.

Belongs to the complex I subunit 4L family. Core subunit of respiratory chain NADH dehydrogenase (Complex I) which is composed of 45 different subunits.

The protein localises to the mitochondrion inner membrane. It catalyses the reaction a ubiquinone + NADH + 5 H(+)(in) = a ubiquinol + NAD(+) + 4 H(+)(out). Its function is as follows. Core subunit of the mitochondrial membrane respiratory chain NADH dehydrogenase (Complex I) which catalyzes electron transfer from NADH through the respiratory chain, using ubiquinone as an electron acceptor. Part of the enzyme membrane arm which is embedded in the lipid bilayer and involved in proton translocation. The polypeptide is NADH-ubiquinone oxidoreductase chain 4L (MT-ND4L) (Pipistrellus abramus (Japanese pipistrelle)).